Reading from the N-terminus, the 575-residue chain is MRPWTGSWRWIMLILFAWGTLLFYIGGHLVRDNDHPDHSSRELSKILAKLERLKQQNEDLRRMAESLRIPEGPIDQGPAIGRVRVLEEQLVKAKEQIENYKKQTRNGLGKDHEILRRRIENGAKELWFFLQSELKKLKNLEGNELQRHADEFLLDLGHHERSIMTDLYYLSQTDGAGDWREKEAKDLTELVQRRITYLQNPKDCSKAKKLVCNINKGCGYGCQLHHVVYCFMIAYGTQRTLILESQNWRYATGGWETVFRPVSETCTDRSGISTGHWSGEVKDKNVQVVELPIVDSLHPRPPYLPLAVPEDLADRLVRVHGDPAVWWVSQFVKYLIRPQPWLEKEIEEATKKLGFKHPVIGVHVRRTDKVGTEAAFHPIEEYMVHVEEHFQLLARRMQVDKKRVYLATDDPSLLKEAKTKYPNYEFISDNSISWSAGLHNRYTENSLRGVILDIHFLSQADFLVCTFSSQVCRVAYEIMQTLHPDASANFHSLDDIYYFGGQNAHNQIAIYAHQPRTADEIPMEPGDIIGVAGNHWDGYSKGVNRKLGRTGLYPSYKVREKIETVKYPTYPEAEK.

Residues 1 to 9 (MRPWTGSWR) lie on the Cytoplasmic side of the membrane. The chain crosses the membrane as a helical; Signal-anchor for type II membrane protein span at residues 10 to 30 (WIMLILFAWGTLLFYIGGHLV). Residues 31 to 575 (RDNDHPDHSS…KYPTYPEAEK (545 aa)) are Lumenal-facing. 3 disulfides stabilise this stretch: C204–C266, C212–C230, and C218–C222. The GT23 domain occupies 206-493 (KAKKLVCNIN…PDASANFHSL (288 aa)). S278 is modified (phosphoserine). Positions 299–305 (PRPPYLP) match the SH3-binding motif. The interval 365–366 (RR) is important for donor substrate binding. The cysteines at positions 465 and 472 are disulfide-linked. The region spanning 502–563 (QNAHNQIAIY…PSYKVREKIE (62 aa)) is the SH3 domain.

It belongs to the glycosyltransferase 23 family. Post-translationally, tyrosine phosphorylated by PKDCC/VLK.

It localises to the golgi apparatus. It is found in the golgi stack membrane. The catalysed reaction is N(4)-{beta-D-GlcNAc-(1-&gt;2)-alpha-D-Man-(1-&gt;3)-[beta-D-GlcNAc-(1-&gt;2)-alpha-D-Man-(1-&gt;6)]-beta-D-Man-(1-&gt;4)-beta-D-GlcNAc-(1-&gt;4)-beta-D-GlcNAc}-L-asparaginyl-[protein] + GDP-beta-L-fucose = an N(4)-{beta-D-GlcNAc-(1-&gt;2)-alpha-D-Man-(1-&gt;3)-[beta-D-GlcNAc-(1-&gt;2)-alpha-D-Man-(1-&gt;6)]-beta-D-Man-(1-&gt;4)-beta-D-GlcNAc-(1-&gt;4)-[alpha-L-Fuc-(1-&gt;6)]-beta-D-GlcNAc}-L-asparaginyl-[protein] + GDP + H(+). The protein operates within protein modification; protein glycosylation. In terms of biological role, catalyzes the addition of fucose in alpha 1-6 linkage to the first GlcNAc residue, next to the peptide chains in N-glycans. This Homo sapiens (Human) protein is Alpha-(1,6)-fucosyltransferase (FUT8).